The following is a 511-amino-acid chain: 2,3-bisphosphoglycerate-independent phosphoglycerate mutase (511 aa).

Asp-12 lines the Mn(2+) pocket. Residue Tyr-36 is modified to Phosphotyrosine. A Mn(2+)-binding site is contributed by Ser-62. The Phosphoserine intermediate role is filled by Ser-62. Substrate-binding positions include His-123, 153–154 (RD), Arg-185, Arg-191, 261–264 (RPDR), and Lys-336. The Mn(2+) site is built by Asp-403, His-407, Asp-444, His-445, and His-462.

This sequence belongs to the BPG-independent phosphoglycerate mutase family. As to quaternary structure, monomer. Mn(2+) is required as a cofactor.

The catalysed reaction is (2R)-2-phosphoglycerate = (2R)-3-phosphoglycerate. It functions in the pathway carbohydrate degradation; glycolysis; pyruvate from D-glyceraldehyde 3-phosphate: step 3/5. In terms of biological role, catalyzes the interconversion of 2-phosphoglycerate and 3-phosphoglycerate. This is 2,3-bisphosphoglycerate-independent phosphoglycerate mutase from Geobacillus kaustophilus (strain HTA426).